The following is an 89-amino-acid chain: Large ribosomal subunit protein uL29c (89 aa).

It belongs to the universal ribosomal protein uL29 family.

The protein resides in the plastid. The protein localises to the chloroplast. This Trieres chinensis (Marine centric diatom) protein is Large ribosomal subunit protein uL29c (rpl29).